The following is a 122-amino-acid chain: MIQMQSTLDVACNSGARRVQCIKVLGGSHRRYAGIGDIIKVSVKEAIPRAKAKKGDVYNAVVVRTKKGVRRPDGSVIRFDRNAAVLLNANLAPIGTRIFGPVTRELRNDKFMKIVSLAPEVL.

Belongs to the universal ribosomal protein uL14 family. In terms of assembly, part of the 50S ribosomal subunit. Forms a cluster with proteins L3 and L19. In the 70S ribosome, L14 and L19 interact and together make contacts with the 16S rRNA in bridges B5 and B8.

Binds to 23S rRNA. Forms part of two intersubunit bridges in the 70S ribosome. The chain is Large ribosomal subunit protein uL14 from Shewanella frigidimarina (strain NCIMB 400).